The following is a 618-amino-acid chain: Carotenoid cleavage dioxygenase 7, chloroplastic (618 aa).

Residues 1-31 constitute a chloroplast transit peptide; the sequence is MSLPIPPKFLPPLKSPPIHHHQTPPPLAPPR. The tract at residues 11–34 is disordered; the sequence is PPLKSPPIHHHQTPPPLAPPRAAI. His-266, His-319, His-398, and His-612 together coordinate Fe cation.

It belongs to the carotenoid oxygenase family. It depends on Fe(2+) as a cofactor. As to expression, expressed in flowers, siliques, inflorescence stems, petiole, leaves and roots.

Its subcellular location is the plastid. The protein resides in the chloroplast. It catalyses the reaction 9-cis-beta-carotene + O2 = 9-cis-10'-apo-beta-carotenal + beta-ionone. Involved in strigolactones biosynthesis by cleaving asymmetrically a variety of linear and cyclic carotenoids at the 9-10 double bond. Produces one C(13) beta-ionone and the C(27) 10'-apo-beta-carotenal. Strigolactones are hormones that inhibit tillering and shoot branching through the MAX-dependent pathway, contribute to the regulation of shoot architectural response to phosphate-limiting conditions and function as rhizosphere signal that stimulates hyphal branching of arbuscular mycorrhizal fungi and trigger seed germination of root parasitic weeds. No activity on lycopene, lutein, zeaxanthin, violaxanthin or neoxanthin. Probably not involved in abscisic acid biosynthesis. This Arabidopsis thaliana (Mouse-ear cress) protein is Carotenoid cleavage dioxygenase 7, chloroplastic (CCD7).